Here is a 180-residue protein sequence, read N- to C-terminus: Acireductone dioxygenase (180 aa).

The Fe(2+) site is built by histidine 97, histidine 99, glutamate 103, and histidine 141. Histidine 97, histidine 99, glutamate 103, and histidine 141 together coordinate Ni(2+).

This sequence belongs to the acireductone dioxygenase (ARD) family. In terms of assembly, monomer. It depends on Fe(2+) as a cofactor. The cofactor is Ni(2+).

The enzyme catalyses 1,2-dihydroxy-5-(methylsulfanyl)pent-1-en-3-one + O2 = 3-(methylsulfanyl)propanoate + CO + formate + 2 H(+). The catalysed reaction is 1,2-dihydroxy-5-(methylsulfanyl)pent-1-en-3-one + O2 = 4-methylsulfanyl-2-oxobutanoate + formate + 2 H(+). The protein operates within amino-acid biosynthesis; L-methionine biosynthesis via salvage pathway; L-methionine from S-methyl-5-thio-alpha-D-ribose 1-phosphate: step 5/6. In terms of biological role, catalyzes 2 different reactions between oxygen and the acireductone 1,2-dihydroxy-3-keto-5-methylthiopentene (DHK-MTPene) depending upon the metal bound in the active site. Fe-containing acireductone dioxygenase (Fe-ARD) produces formate and 2-keto-4-methylthiobutyrate (KMTB), the alpha-ketoacid precursor of methionine in the methionine recycle pathway. Ni-containing acireductone dioxygenase (Ni-ARD) produces methylthiopropionate, carbon monoxide and formate, and does not lie on the methionine recycle pathway. The chain is Acireductone dioxygenase from Serratia proteamaculans (strain 568).